A 274-amino-acid chain; its full sequence is NADPH-dependent 7-cyano-7-deazaguanine reductase (274 aa).

Residue 80 to 82 participates in substrate binding; the sequence is VES. Residue 82-83 coordinates NADPH; that stretch reads SK. The active-site Thioimide intermediate is the C181. Residue D188 is the Proton donor of the active site. Substrate is bound at residue 220–221; sequence HE. Position 249-250 (249-250) interacts with NADPH; that stretch reads RG.

This sequence belongs to the GTP cyclohydrolase I family. QueF type 2 subfamily. In terms of assembly, homodimer.

The protein localises to the cytoplasm. The enzyme catalyses 7-aminomethyl-7-carbaguanine + 2 NADP(+) = 7-cyano-7-deazaguanine + 2 NADPH + 3 H(+). The protein operates within tRNA modification; tRNA-queuosine biosynthesis. Catalyzes the NADPH-dependent reduction of 7-cyano-7-deazaguanine (preQ0) to 7-aminomethyl-7-deazaguanine (preQ1). The protein is NADPH-dependent 7-cyano-7-deazaguanine reductase of Burkholderia mallei (strain NCTC 10247).